A 361-amino-acid polypeptide reads, in one-letter code: POU domain, class 3, transcription factor 4 (361 aa).

Disordered regions lie at residues 99 to 131 (PHVA…GQPL) and 144 to 192 (MLEH…PTSD). Residues 119–131 (APNSSITSSGQPL) are compositionally biased toward polar residues. The span at 165-183 (VLREPPDHGELGSHHCQDH) shows a compositional bias: basic and acidic residues. One can recognise a POU-specific domain in the interval 186–260 (EETPTSDELE…LLNKWLEEAD (75 aa)). Ser-265 is modified (phosphoserine). A DNA-binding region (homeobox) is located at residues 278 to 337 (KRKKRTSIEVSVKGVLETHFLKCPKPAAQEISSLADSLQLEKEVVRVWFCNRRQKEKRMT). Residues 334–361 (KRMTPPGDQQPHEVYSHTVKTDASCHDL) are disordered. The segment covering 343–361 (QPHEVYSHTVKTDASCHDL) has biased composition (basic and acidic residues).

This sequence belongs to the POU transcription factor family. Class-3 subfamily. In terms of assembly, interacts with HNRNPU. Brain specific.

The protein localises to the nucleus. In terms of biological role, probable transcription factor which exert its primary action widely during early neural development and in a very limited set of neurons in the mature brain. The protein is POU domain, class 3, transcription factor 4 (Pou3f4) of Mus musculus (Mouse).